Consider the following 284-residue polypeptide: Tropomyosin (284 aa).

The tract at residues 1–54 is disordered; it reads MDAIKKKMQAMKLEKDNAMDRADTLEQQNKEANNRAEKTEEEIRATQKKMQQVE. Residues 1-273 are a coiled coil; that stretch reads MDAIKKKMQA…KEKYKSITDE (273 aa). Basic and acidic residues predominate over residues 12–45; the sequence is KLEKDNAMDRADTLEQQNKEANNRAEKTEEEIRA.

Belongs to the tropomyosin family. As to quaternary structure, homodimer. In terms of tissue distribution, muscle (at protein level). Expressed in leg and chest protection muscle (at protein level). Expressed in claw muscle.

Functionally, tropomyosin, in association with the troponin complex, plays a central role in the calcium dependent regulation of muscle contraction. The sequence is that of Tropomyosin from Eriocheir sinensis (Chinese mitten crab).